The chain runs to 434 residues: Glutamyl-tRNA reductase (434 aa).

Substrate is bound by residues 49-52, S109, 114-116, and Q120; these read TCNR and EPQ. The active-site Nucleophile is C50. Position 189–194 (189–194) interacts with NADP(+); the sequence is GAGEMC.

The protein belongs to the glutamyl-tRNA reductase family. Homodimer.

The catalysed reaction is (S)-4-amino-5-oxopentanoate + tRNA(Glu) + NADP(+) = L-glutamyl-tRNA(Glu) + NADPH + H(+). The protein operates within porphyrin-containing compound metabolism; protoporphyrin-IX biosynthesis; 5-aminolevulinate from L-glutamyl-tRNA(Glu): step 1/2. Functionally, catalyzes the NADPH-dependent reduction of glutamyl-tRNA(Glu) to glutamate 1-semialdehyde (GSA). This is Glutamyl-tRNA reductase from Geotalea uraniireducens (strain Rf4) (Geobacter uraniireducens).